Here is a 111-residue protein sequence, read N- to C-terminus: MKFSTTLLALTASIAAVMSADSSAAASGAASAASGAKSGATSAASGAKSGASSVASAAKSGVSSAASAAKSGASSATGGSSAAKSGSSSGAGFAPVAGAGSLAAIAGLLLL.

Positions 1–19 (MKFSTTLLALTASIAAVMS) are cleaved as a signal peptide. Positions 71–90 (SGASSATGGSSAAKSGSSSG) are disordered. Ser81 carries the GPI-anchor amidated serine lipid modification. The propeptide at 82-111 (AAKSGSSSGAGFAPVAGAGSLAAIAGLLLL) is removed in mature form.

The GPI-anchor is attached to the protein in the endoplasmic reticulum and serves to target the protein to the cell surface. There, the glucosamine-inositol phospholipid moiety is cleaved off and the GPI-modified mannoprotein is covalently attached via its lipidless GPI glycan remnant to the 1,6-beta-glucan of the outer cell wall layer.

Its subcellular location is the secreted. It is found in the cell wall. The protein localises to the membrane. Probable cell wall protein required for filamentation at low pH. This Candida albicans (strain SC5314 / ATCC MYA-2876) (Yeast) protein is Repressed By RIM101 protein 1 (RBR1).